A 139-amino-acid chain; its full sequence is MGLADDAPLGYLLYRVGAVLRPEVSAALSPLGLTLPEFVCLRMLSQSPGLSSAELARHASVTPQAMNTVLRKLEDAGAVARPASVSSGRSLPATLTARGRALAKRAEAVVRAADARVLARLTAPQQREFKRMLEKLGSD.

Positions 6-138 constitute an HTH marR-type domain; it reads DAPLGYLLYR…FKRMLEKLGS (133 aa).

In terms of assembly, homodimer.

Represses expression of the HQNO methyltransferase htm gene by binding to its promoter region. The polypeptide is HTH-type transcriptional repressor Mb2911 (Mycobacterium bovis (strain ATCC BAA-935 / AF2122/97)).